A 234-amino-acid polypeptide reads, in one-letter code: (5-formylfuran-3-yl)methyl phosphate synthase (234 aa).

K27 serves as the catalytic Schiff-base intermediate with substrate. K85 acts as the Proton acceptor in catalysis.

The protein belongs to the MfnB family.

The catalysed reaction is 2 D-glyceraldehyde 3-phosphate = 4-(hydroxymethyl)-2-furancarboxaldehyde phosphate + phosphate + 2 H2O. Its pathway is cofactor biosynthesis; methanofuran biosynthesis. In terms of biological role, catalyzes the formation of 4-(hydroxymethyl)-2-furancarboxaldehyde phosphate (4-HFC-P) from two molecules of glyceraldehyde-3-P (GA-3-P). The protein is (5-formylfuran-3-yl)methyl phosphate synthase of Methanosarcina barkeri (strain Fusaro / DSM 804).